The following is a 178-amino-acid chain: Large ribosomal subunit protein bL25 (178 aa).

The protein belongs to the bacterial ribosomal protein bL25 family. CTC subfamily. In terms of assembly, part of the 50S ribosomal subunit; part of the 5S rRNA/L5/L18/L25 subcomplex. Contacts the 5S rRNA. Binds to the 5S rRNA independently of L5 and L18.

Its function is as follows. This is one of the proteins that binds to the 5S RNA in the ribosome where it forms part of the central protuberance. The polypeptide is Large ribosomal subunit protein bL25 (Helicobacter acinonychis (strain Sheeba)).